A 492-amino-acid chain; its full sequence is Glutamyl-tRNA(Gln) amidotransferase subunit A (492 aa).

Residues K78 and S158 each act as charge relay system in the active site. Catalysis depends on S182, which acts as the Acyl-ester intermediate.

Belongs to the amidase family. GatA subfamily. In terms of assembly, heterotrimer of A, B and C subunits.

It catalyses the reaction L-glutamyl-tRNA(Gln) + L-glutamine + ATP + H2O = L-glutaminyl-tRNA(Gln) + L-glutamate + ADP + phosphate + H(+). Allows the formation of correctly charged Gln-tRNA(Gln) through the transamidation of misacylated Glu-tRNA(Gln) in organisms which lack glutaminyl-tRNA synthetase. The reaction takes place in the presence of glutamine and ATP through an activated gamma-phospho-Glu-tRNA(Gln). The protein is Glutamyl-tRNA(Gln) amidotransferase subunit A of Rhodopseudomonas palustris (strain BisB18).